We begin with the raw amino-acid sequence, 372 residues long: Lipid-A-disaccharide synthase (372 aa).

This sequence belongs to the LpxB family.

The enzyme catalyses a lipid X + a UDP-2-N,3-O-bis[(3R)-3-hydroxyacyl]-alpha-D-glucosamine = a lipid A disaccharide + UDP + H(+). The protein operates within bacterial outer membrane biogenesis; LPS lipid A biosynthesis. In terms of biological role, condensation of UDP-2,3-diacylglucosamine and 2,3-diacylglucosamine-1-phosphate to form lipid A disaccharide, a precursor of lipid A, a phosphorylated glycolipid that anchors the lipopolysaccharide to the outer membrane of the cell. In Thiobacillus denitrificans (strain ATCC 25259 / T1), this protein is Lipid-A-disaccharide synthase.